The chain runs to 149 residues: MTQRTVWQDFQNGQQYMATWPMRKELAAIFPEQRYIKATKFATRVMPAVAVMSVLSQMAFNNYGALPQAMTVALFALTMPLQGLWWLGKRSRTTLPPSLAIWYREIYEKITSEGHAMQPLKKQPRYLELAEVLNRAFKQLDKTSLERWF.

The next 2 membrane-spanning stretches (helical) occupy residues 41–60 (FATRVMPAVAVMSVLSQMAF) and 65–87 (ALPQAMTVALFALTMPLQGLWWL).

It belongs to the UPF0208 family.

The protein resides in the cell inner membrane. The sequence is that of UPF0208 membrane protein PBPRA2797 from Photobacterium profundum (strain SS9).